The following is a 196-amino-acid chain: Putative 3-methyladenine DNA glycosylase (196 aa).

Belongs to the DNA glycosylase MPG family.

In Chlamydia pneumoniae (Chlamydophila pneumoniae), this protein is Putative 3-methyladenine DNA glycosylase.